A 316-amino-acid chain; its full sequence is Transaldolase (316 aa).

Catalysis depends on Lys-132, which acts as the Schiff-base intermediate with substrate.

This sequence belongs to the transaldolase family. Type 1 subfamily. As to quaternary structure, homodimer.

Its subcellular location is the cytoplasm. It catalyses the reaction D-sedoheptulose 7-phosphate + D-glyceraldehyde 3-phosphate = D-erythrose 4-phosphate + beta-D-fructose 6-phosphate. Its pathway is carbohydrate degradation; pentose phosphate pathway; D-glyceraldehyde 3-phosphate and beta-D-fructose 6-phosphate from D-ribose 5-phosphate and D-xylulose 5-phosphate (non-oxidative stage): step 2/3. Transaldolase is important for the balance of metabolites in the pentose-phosphate pathway. The polypeptide is Transaldolase (Vibrio vulnificus (strain CMCP6)).